A 43-amino-acid chain; its full sequence is Photosystem I reaction center subunit IX (43 aa).

Residues 7 to 27 traverse the membrane as a helical segment; sequence YLSVAPVLSALWFGALAGLLI.

The protein belongs to the PsaJ family.

It is found in the plastid. The protein resides in the chloroplast thylakoid membrane. May help in the organization of the PsaE and PsaF subunits. In Oenothera argillicola (Appalachian evening primrose), this protein is Photosystem I reaction center subunit IX.